The sequence spans 717 residues: Acetone carboxylase beta subunit (717 aa).

As to quaternary structure, heterohexamer of two alpha, two beta and two gamma subunits. Requires Fe cation as cofactor. Mg(2+) serves as cofactor. Zn(2+) is required as a cofactor. Post-translationally, the N-terminus is blocked.

It catalyses the reaction acetone + hydrogencarbonate + 2 ATP + 3 H2O = acetoacetate + 2 AMP + 4 phosphate + 4 H(+). In terms of biological role, catalyzes the carboxylation of acetone to form acetoacetate. Has a reduced activity on butanone, and no activity on 2-pentatone, 3-pentatone, 2-hexanone, chloroacetone, pyruvate, phosphoenolpyruvate, acetaldehyde, propionaldehyde and propylene oxide. The protein is Acetone carboxylase beta subunit of Xanthobacter autotrophicus (strain ATCC BAA-1158 / Py2).